The following is a 42-amino-acid chain: Delta-actitoxin-Ael2d (42 aa).

3 disulfides stabilise this stretch: cysteine 4–cysteine 37, cysteine 6–cysteine 30, and cysteine 20–cysteine 38.

This sequence belongs to the sea anemone type 3 (BDS) potassium channel toxin family.

It is found in the secreted. The protein resides in the nematocyst. Binds to voltage-gated sodium channels (Nav), and slows down the inactivation of mammalian Nav1.2/SCN2A, Nav1.3/SCN3A Nav1.4/SCN4A, Nav1.6/SCN8A, insect DmNav1 and BgNav1 channels, and arachnid VdNav1 channel. This toxin acts by binding to site 3 of sodium channels. The polypeptide is Delta-actitoxin-Ael2d (Anthopleura elegantissima (Green aggregating anemone)).